Here is a 49-residue protein sequence, read N- to C-terminus: Large ribosomal subunit protein bL33A (49 aa).

The protein belongs to the bacterial ribosomal protein bL33 family.

This Geobacillus thermodenitrificans (strain NG80-2) protein is Large ribosomal subunit protein bL33A.